Reading from the N-terminus, the 316-residue chain is MQILLANPRGFCAGVDRAISIVENALAIYGAPIYVRHEVVHNRYVVDSLRQRGAIFIEQISEVPDGAILIFSAHGVSQAVRNEAKSRDLTVFDATCPLVTKVHMEVARASRRGEESILIGHAGHPEVEGTMGQYSNPEGGMYLVESPEDVWTLNVKNEGKLSFMTQTTLSVDDTSDVIDALRKRFPKIVGPRKDDICYATTNRQEAVRALAEQADVVLVVGSKNSSNSNRLAELAQRMGRTAFLIDDAADIQEAWVKDAACVGVTAGASAPDILVQNVIARLREFGGGEAVTLEGREENIVFEVPKELRVDVREVE.

Cys-12 lines the [4Fe-4S] cluster pocket. Positions 41 and 74 each coordinate (2E)-4-hydroxy-3-methylbut-2-enyl diphosphate. Residues His-41 and His-74 each contribute to the dimethylallyl diphosphate site. Residues His-41 and His-74 each coordinate isopentenyl diphosphate. Residue Cys-96 coordinates [4Fe-4S] cluster. (2E)-4-hydroxy-3-methylbut-2-enyl diphosphate is bound at residue His-124. Residue His-124 coordinates dimethylallyl diphosphate. An isopentenyl diphosphate-binding site is contributed by His-124. The active-site Proton donor is Glu-126. (2E)-4-hydroxy-3-methylbut-2-enyl diphosphate is bound at residue Thr-167. Cys-197 serves as a coordination point for [4Fe-4S] cluster. Positions 225, 226, 227, and 269 each coordinate (2E)-4-hydroxy-3-methylbut-2-enyl diphosphate. Residues Ser-225, Ser-226, Asn-227, and Ser-269 each contribute to the dimethylallyl diphosphate site. Isopentenyl diphosphate is bound by residues Ser-225, Ser-226, Asn-227, and Ser-269.

It belongs to the IspH family. In terms of assembly, homodimer. [4Fe-4S] cluster is required as a cofactor.

It catalyses the reaction isopentenyl diphosphate + 2 oxidized [2Fe-2S]-[ferredoxin] + H2O = (2E)-4-hydroxy-3-methylbut-2-enyl diphosphate + 2 reduced [2Fe-2S]-[ferredoxin] + 2 H(+). It carries out the reaction dimethylallyl diphosphate + 2 oxidized [2Fe-2S]-[ferredoxin] + H2O = (2E)-4-hydroxy-3-methylbut-2-enyl diphosphate + 2 reduced [2Fe-2S]-[ferredoxin] + 2 H(+). The protein operates within isoprenoid biosynthesis; dimethylallyl diphosphate biosynthesis; dimethylallyl diphosphate from (2E)-4-hydroxy-3-methylbutenyl diphosphate: step 1/1. It functions in the pathway isoprenoid biosynthesis; isopentenyl diphosphate biosynthesis via DXP pathway; isopentenyl diphosphate from 1-deoxy-D-xylulose 5-phosphate: step 6/6. Catalyzes the conversion of 1-hydroxy-2-methyl-2-(E)-butenyl 4-diphosphate (HMBPP) into a mixture of isopentenyl diphosphate (IPP) and dimethylallyl diphosphate (DMAPP). Acts in the terminal step of the DOXP/MEP pathway for isoprenoid precursor biosynthesis. The chain is 4-hydroxy-3-methylbut-2-enyl diphosphate reductase from Salmonella typhi.